The chain runs to 133 residues: EFSRSQRVSQEMQKEIALILQREIKDPRVGMATVSGIELSRDLAYAKVFVTFLNVLTDNADPDTAKNGIKALQDASGYIRTLLGKAMRLRIVPELTFAYDNSLIEGMRMSNLVTNVIKNDVERQVNPGSDEEK.

Belongs to the RbfA family. As to quaternary structure, monomer. Binds 30S ribosomal subunits, but not 50S ribosomal subunits or 70S ribosomes.

It localises to the cytoplasm. One of several proteins that assist in the late maturation steps of the functional core of the 30S ribosomal subunit. Associates with free 30S ribosomal subunits (but not with 30S subunits that are part of 70S ribosomes or polysomes). Required for efficient processing of 16S rRNA. May interact with the 5'-terminal helix region of 16S rRNA. This Yersinia enterocolitica protein is Ribosome-binding factor A.